The chain runs to 691 residues: Elongation factor G (691 aa).

A tr-type G domain is found at E8–A283. GTP contacts are provided by residues A17 to T24, D81 to H85, and N135 to D138.

This sequence belongs to the TRAFAC class translation factor GTPase superfamily. Classic translation factor GTPase family. EF-G/EF-2 subfamily.

The protein localises to the cytoplasm. Catalyzes the GTP-dependent ribosomal translocation step during translation elongation. During this step, the ribosome changes from the pre-translocational (PRE) to the post-translocational (POST) state as the newly formed A-site-bound peptidyl-tRNA and P-site-bound deacylated tRNA move to the P and E sites, respectively. Catalyzes the coordinated movement of the two tRNA molecules, the mRNA and conformational changes in the ribosome. The protein is Elongation factor G of Methylobacterium sp. (strain 4-46).